The chain runs to 324 residues: tRNA dimethylallyltransferase (324 aa).

Gly17–Thr24 serves as a coordination point for ATP. Residue Thr19–Thr24 participates in substrate binding. 3 interaction with substrate tRNA regions span residues Asp42–Leu45, Gln166–Arg170, and Arg251–Arg256.

This sequence belongs to the IPP transferase family. In terms of assembly, monomer. The cofactor is Mg(2+).

The enzyme catalyses adenosine(37) in tRNA + dimethylallyl diphosphate = N(6)-dimethylallyladenosine(37) in tRNA + diphosphate. Functionally, catalyzes the transfer of a dimethylallyl group onto the adenine at position 37 in tRNAs that read codons beginning with uridine, leading to the formation of N6-(dimethylallyl)adenosine (i(6)A). This is tRNA dimethylallyltransferase from Burkholderia thailandensis (strain ATCC 700388 / DSM 13276 / CCUG 48851 / CIP 106301 / E264).